The following is a 345-amino-acid chain: MLSINPTLINRDKPYTKEELMEILRLAIIAELDAINLYEQMARYSEDENVRKILLDVAREEKAHVGEFMALLLNLDPEQVTELKGGFEEVKELTGIEAHINDNKKEESNVEYFEKLRSALLDGVNKGRSLLKHLPVTRIEGQSFRVDIIKFEDGVRVVKQEYKPIPLLKKKFYVGIRELNDGTYDVSIATKAGELLVKDEESLVIREILSTEGIKKMKLSSWDNPEEALNDLMNALQEASNASAGPFGLIINPKRYAKLLKIYEKSGKMLVEVLKEIFRGGIIVTLNIDENKVIIFANTPAVLDVVVGQDVTLQELGPEGDDVAFLVSEAIGIRIKNPEAIVVLE.

Residues 1–109 (MLSINPTLIN…INDNKKEESN (109 aa)) are ferritin-like domain. Glutamate 31, glutamate 61, and histidine 64 together coordinate Fe cation. Residues 110 to 345 (VEYFEKLRSA…KNPEAIVVLE (236 aa)) form an encapsulin domain region.

This sequence in the N-terminal section; belongs to the ferritin-like superfamily. In the C-terminal section; belongs to the encapsulin family. Family 1 subfamily. As to quaternary structure, 180 monomers assemble into 12 pentamers and 20 hexamers which further assemble into an icosahedral particle about 36.6 nm in diameter. The N-terminal domain (residues 1-99) crystallizes as 3 decamers.

Its subcellular location is the encapsulin nanocompartment. It carries out the reaction 4 Fe(2+) + O2 + 4 H(+) = 4 Fe(3+) + 2 H2O. The ferroxidase activity is inhibited by zinc. Functionally, fusion of the shell and cargo protein of a type 1 encapsulin nanocompartment. The nanocompartment is probably involved in iron storage. Expression in E.coli generates spherical particles (PfSPs) about 30 nm in diameter. The purified N-terminus has ferroxidase activity. The sequence is that of Ferritin-like-encapsulin shell fusion protein from Pyrococcus furiosus (strain ATCC 43587 / DSM 3638 / JCM 8422 / Vc1).